Here is a 768-residue protein sequence, read N- to C-terminus: DNA replication licensing factor MCM3 homolog 1 (768 aa).

Positions threonine 290 to alanine 497 constitute an MCM domain. Glycine 340 to serine 347 contacts ATP. Positions serine 472–aspartate 475 match the Arginine finger motif. A disordered region spans residues methionine 662 to proline 687. Gly residues predominate over residues alanine 672–serine 682.

It belongs to the MCM family.

It is found in the nucleus. It carries out the reaction ATP + H2O = ADP + phosphate + H(+). Functionally, acts as a factor that allows the DNA to undergo a single round of replication per cell cycle. Required for DNA replication and cell proliferation. May act as a component of the MCM complex which is the putative replicative helicase of the replication licensing system in eukaryotic cells. In Zea mays (Maize), this protein is DNA replication licensing factor MCM3 homolog 1 (ROA1).